The sequence spans 229 residues: 2-C-methyl-D-erythritol 4-phosphate cytidylyltransferase (229 aa).

It belongs to the IspD/TarI cytidylyltransferase family. IspD subfamily.

It catalyses the reaction 2-C-methyl-D-erythritol 4-phosphate + CTP + H(+) = 4-CDP-2-C-methyl-D-erythritol + diphosphate. The protein operates within isoprenoid biosynthesis; isopentenyl diphosphate biosynthesis via DXP pathway; isopentenyl diphosphate from 1-deoxy-D-xylulose 5-phosphate: step 2/6. In terms of biological role, catalyzes the formation of 4-diphosphocytidyl-2-C-methyl-D-erythritol from CTP and 2-C-methyl-D-erythritol 4-phosphate (MEP). This Clostridium botulinum (strain Okra / Type B1) protein is 2-C-methyl-D-erythritol 4-phosphate cytidylyltransferase.